The following is a 573-amino-acid chain: 60 kDa heat shock protein, mitochondrial (573 aa).

The transit peptide at 1–26 (MLRLPTVLRQMRPVSRALAPHLTRAY) directs the protein to the mitochondrion. Lysine 31 is modified (N6-succinyllysine). A phosphoserine mark is found at serine 67 and serine 70. Residue lysine 75 participates in ATP binding. Lysine 75 bears the N6-acetyllysine mark. Lysine 82 is modified (N6-acetyllysine; alternate). N6-succinyllysine; alternate is present on lysine 82. Residue lysine 87 is modified to N6-acetyllysine. Tyrosine 90 is modified (phosphotyrosine). Residue lysine 91 is modified to N6-acetyllysine. 111-115 (DGTTT) lines the ATP pocket. Lysine 125 carries the N6-acetyllysine; alternate modification. An N6-succinyllysine; alternate modification is found at lysine 125. Position 130 is an N6-acetyllysine (lysine 130). An N6-acetyllysine; alternate modification is found at lysine 133. An N6-succinyllysine; alternate modification is found at lysine 133. Lysine 133 bears the N6-malonyllysine; alternate mark. The residue at position 156 (lysine 156) is an N6-acetyllysine. An N6-acetyllysine; alternate mark is found at lysine 191, lysine 202, lysine 205, lysine 218, and lysine 236. Residues lysine 191, lysine 202, lysine 205, lysine 218, and lysine 236 each carry the N6-succinyllysine; alternate modification. Lysine 249 carries the post-translational modification N6-acetyllysine. Lysine 250 bears the N6-acetyllysine; alternate mark. Lysine 250 is subject to N6-succinyllysine; alternate. Lysine 269 and lysine 292 each carry N6-acetyllysine. The residue at position 301 (lysine 301) is an N6-succinyllysine. Lysine 314 is subject to N6-acetyllysine. N6-acetyllysine; alternate is present on lysine 352. The residue at position 352 (lysine 352) is an N6-succinyllysine; alternate. 2 positions are modified to N6-acetyllysine: lysine 359 and lysine 389. Position 396 is an N6-acetyllysine; alternate (lysine 396). Lysine 396 carries the post-translational modification N6-succinyllysine; alternate. Phosphoserine is present on serine 410. Glycine 440 lines the ATP pocket. N6-acetyllysine; alternate is present on lysine 455. The residue at position 455 (lysine 455) is an N6-succinyllysine; alternate. Position 469 is an N6-acetyllysine (lysine 469). Residue lysine 481 is modified to N6-acetyllysine; alternate. Lysine 481 carries the post-translational modification N6-succinyllysine; alternate. Serine 488 carries the phosphoserine modification. Position 520 (aspartate 520) interacts with ATP. Residue lysine 551 forms a Glycyl lysine isopeptide (Lys-Gly) (interchain with G-Cter in SUMO2) linkage.

It belongs to the chaperonin (HSP60) family. In terms of assembly, homoheptamer arranged in a ring structure. The functional units of these chaperonins consist of heptameric rings of the large subunit Hsp60, which function as a back-to-back double ring. Interacts with 2 heptameric Hsp10 rings to form the symmetrical football complex. Interacts with HRAS. Interacts with ATAD3A. Interacts with ETFBKMT and EEF1AKMT3. Interacts with MFHAS1.

It is found in the mitochondrion matrix. The enzyme catalyses ATP + H2O + a folded polypeptide = ADP + phosphate + an unfolded polypeptide.. In terms of biological role, chaperonin implicated in mitochondrial protein import and macromolecular assembly. Together with Hsp10, facilitates the correct folding of imported proteins. May also prevent misfolding and promote the refolding and proper assembly of unfolded polypeptides generated under stress conditions in the mitochondrial matrix. The functional units of these chaperonins consist of heptameric rings of the large subunit Hsp60, which function as a back-to-back double ring. In a cyclic reaction, Hsp60 ring complexes bind one unfolded substrate protein per ring, followed by the binding of ATP and association with 2 heptameric rings of the co-chaperonin Hsp10. This leads to sequestration of the substrate protein in the inner cavity of Hsp60 where, for a certain period of time, it can fold undisturbed by other cell components. Synchronous hydrolysis of ATP in all Hsp60 subunits results in the dissociation of the chaperonin rings and the release of ADP and the folded substrate protein. In Rattus norvegicus (Rat), this protein is 60 kDa heat shock protein, mitochondrial (Hspd1).